Consider the following 331-residue polypeptide: MATTTTVDDAQPPTLQNILDQKSLKWIFCGGKGGVGKTTTSCSLAIQLAKVRESVLLISTDPAHNLSDAFGQKFGREAVKVNGFSNLSAMEIDPTSSMQEMIEQSEQRGGALAPFMQDLAFAIPGVDEAMGFAEIMKLVKSMEYSVVVFDTAPTGHTLRFLSFPSVLEKALTKFSSFGKSLGPMFQQFQSMMGGGANAQEDMFAKLEGMRQVITEVNSQFKDETKTTFVCVCIAEFLSLYETERLIQELTQYGIDTHAIVCNQLLYPPPGSQCEHCRVRKAMQDKYVHEMMDLYAEDFNVVKIPLLTEEVRGPEKLSSLSEYLMHPYQPPQ.

Lysine 32 to threonine 39 is a binding site for ATP. Aspartate 61 is an active-site residue. ATP-binding residues include glutamate 235 and asparagine 262. Zn(2+) is bound by residues cysteine 273 and cysteine 276.

The protein belongs to the arsA ATPase family. In terms of assembly, homodimer.

The protein localises to the cytoplasm. It is found in the endoplasmic reticulum. Functionally, ATPase required for the post-translational delivery of tail-anchored (TA) proteins to the endoplasmic reticulum. Recognizes and selectively binds the transmembrane domain of TA proteins in the cytosol. This complex then targets to the endoplasmic reticulum by membrane-bound receptors, where the tail-anchored protein is released for insertion. This process is regulated by ATP binding and hydrolysis. ATP binding drives the homodimer towards the closed dimer state, facilitating recognition of newly synthesized TA membrane proteins. ATP hydrolysis is required for insertion. Subsequently, the homodimer reverts towards the open dimer state, lowering its affinity for the membrane-bound receptor, and returning it to the cytosol to initiate a new round of targeting. This Malassezia globosa (strain ATCC MYA-4612 / CBS 7966) (Dandruff-associated fungus) protein is ATPase GET3.